The following is an 80-amino-acid chain: Conotoxin Bt6.5 (80 aa).

An N-terminal signal peptide occupies residues 1–22 (MKLTCVLIIAVLFLTACQLATA). Positions 23–45 (KTYSTGRQKHRALRSTDKNIKLS) are excised as a propeptide. Disulfide bonds link Cys48/Cys62, Cys55/Cys66, and Cys61/Cys73.

This sequence belongs to the conotoxin O1 superfamily. In terms of tissue distribution, expressed by the venom duct.

The protein localises to the secreted. Functionally, when injected intracranially in mice, induces a series of symptoms such as quivering, climbing, scratching, barrel rolling and paralysis of limbs. Unexpectedly, no effect is observed on ionic currents when tested on locust DUM neuron. This Conus betulinus (Beech cone) protein is Conotoxin Bt6.5.